The following is a 408-amino-acid chain: RNA-splicing ligase RtcB1 (408 aa).

Positions 75, 78, 168, 185, and 281 each coordinate Mn(2+). 167–171 (NHFIE) serves as a coordination point for GMP. Residues 281-282 (HN), 313-316 (PGSM), S320, 337-340 (HGAG), and K407 each bind GMP. Residue H337 is the GMP-histidine intermediate of the active site.

The protein belongs to the RtcB family. Monomer. It depends on Mn(2+) as a cofactor.

It carries out the reaction a 3'-end 3'-phospho-ribonucleotide-RNA + a 5'-end dephospho-ribonucleoside-RNA + GTP = a ribonucleotidyl-ribonucleotide-RNA + GMP + diphosphate. It catalyses the reaction a 3'-end 2',3'-cyclophospho-ribonucleotide-RNA + a 5'-end dephospho-ribonucleoside-RNA + GTP + H2O = a ribonucleotidyl-ribonucleotide-RNA + GMP + diphosphate + H(+). In terms of biological role, GTP-dependent RNA ligase that is involved in RNA repair. Joins RNA with 2',3'-cyclic-phosphate or 3'-phosphate ends to RNA with 5'-hydroxy ends. GTP-dependent RNA ligase that is involved in tRNA repair. Repairs broken tRNA(Asp) and tRNA(Arg) that have been cleaved by colicin E5 or colicin D, respectively. Does not repair damaged 16S rRNA in 30S ribosomal subunits. The protein is RNA-splicing ligase RtcB1 of Escherichia coli (strain ATCC 25922 / DSM 1103 / LMG 8223 / NCIMB 12210 / NCTC 12241 / WDCM 00013 / Seattle 1946).